The sequence spans 270 residues: Putative pyruvate, phosphate dikinase regulatory protein (270 aa).

ADP is bound at residue 148–155 (GVSRTSKT).

It belongs to the pyruvate, phosphate/water dikinase regulatory protein family. PDRP subfamily.

The catalysed reaction is N(tele)-phospho-L-histidyl/L-threonyl-[pyruvate, phosphate dikinase] + ADP = N(tele)-phospho-L-histidyl/O-phospho-L-threonyl-[pyruvate, phosphate dikinase] + AMP + H(+). The enzyme catalyses N(tele)-phospho-L-histidyl/O-phospho-L-threonyl-[pyruvate, phosphate dikinase] + phosphate + H(+) = N(tele)-phospho-L-histidyl/L-threonyl-[pyruvate, phosphate dikinase] + diphosphate. Its function is as follows. Bifunctional serine/threonine kinase and phosphorylase involved in the regulation of the pyruvate, phosphate dikinase (PPDK) by catalyzing its phosphorylation/dephosphorylation. The chain is Putative pyruvate, phosphate dikinase regulatory protein from Bacillus cytotoxicus (strain DSM 22905 / CIP 110041 / 391-98 / NVH 391-98).